We begin with the raw amino-acid sequence, 926 residues long: Serine/threonine-protein kinase/endoribonuclease IRE2 (926 aa).

The signal sequence occupies residues 1–34; that stretch reads MASAVRGSRPWPRLGLQLQFAALLLGTLSPQVHT. Residues 35–430 lie on the Lumenal side of the membrane; sequence LRPENLLLVS…TPDSYLGLGP (396 aa). A helical membrane pass occupies residues 431–451; that stretch reads QDLLAASLTAVLLGGWILFVM. Residues 452–926 are Cytoplasmic-facing; sequence RQQQPQVVEK…RRPCPGATGR (475 aa). Residues 478–501 are compositionally biased toward polar residues; it reads DAQSLHSGASRRSQKRLQSPSKQA. Positions 478–509 are disordered; that stretch reads DAQSLHSGASRRSQKRLQSPSKQAQPLDDPEA. Residues 520 to 781 form the Protein kinase domain; it reads FNPKDVLGRG…APQVLAHPFF (262 aa). ATP contacts are provided by residues 526–534 and Lys-548; that span reads LGRGAGGTF. Asp-637 acts as the Proton acceptor in catalysis. The 129-residue stretch at 784–912 folds into the KEN domain; sequence RAKQLQFFQD…ESLFLPYYPP (129 aa).

It belongs to the protein kinase superfamily. Ser/Thr protein kinase family. Mg(2+) is required as a cofactor. Post-translationally, autophosphorylated.

The protein resides in the endoplasmic reticulum membrane. It catalyses the reaction L-seryl-[protein] + ATP = O-phospho-L-seryl-[protein] + ADP + H(+). The catalysed reaction is L-threonyl-[protein] + ATP = O-phospho-L-threonyl-[protein] + ADP + H(+). With respect to regulation, the kinase domain is activated by trans-autophosphorylation. Kinase activity is required for activation of the endoribonuclease domain. In terms of biological role, induces translational repression through 28S ribosomal RNA cleavage in response to ER stress. Pro-apoptotic. Appears to play no role in the unfolded-protein response, unlike closely related proteins. The polypeptide is Serine/threonine-protein kinase/endoribonuclease IRE2 (Homo sapiens (Human)).